A 69-amino-acid chain; its full sequence is uncharacterized protein (69 aa).

This is an uncharacterized protein from Mycobacterium tuberculosis (strain ATCC 25618 / H37Rv).